The sequence spans 270 residues: 3-methyl-2-oxobutanoate hydroxymethyltransferase (270 aa).

Positions 43 and 82 each coordinate Mg(2+). 3-methyl-2-oxobutanoate contacts are provided by residues 43–44 (DS), aspartate 82, and lysine 112. Glutamate 114 provides a ligand contact to Mg(2+). Glutamate 179 (proton acceptor) is an active-site residue.

The protein belongs to the PanB family. Homodecamer; pentamer of dimers. The cofactor is Mg(2+).

It localises to the cytoplasm. It carries out the reaction 3-methyl-2-oxobutanoate + (6R)-5,10-methylene-5,6,7,8-tetrahydrofolate + H2O = 2-dehydropantoate + (6S)-5,6,7,8-tetrahydrofolate. It participates in cofactor biosynthesis; (R)-pantothenate biosynthesis; (R)-pantoate from 3-methyl-2-oxobutanoate: step 1/2. Its function is as follows. Catalyzes the reversible reaction in which hydroxymethyl group from 5,10-methylenetetrahydrofolate is transferred onto alpha-ketoisovalerate to form ketopantoate. The sequence is that of 3-methyl-2-oxobutanoate hydroxymethyltransferase from Staphylococcus carnosus (strain TM300).